A 311-amino-acid chain; its full sequence is Forkhead box protein R2 (311 aa).

2 disordered regions span residues 56–76 (PPEMPQKRRPSPDGDGPPCEP) and 90–171 (LGSQ…QSPE). Positions 115 to 128 (QKDEGSNCSEDKVV) are enriched in basic and acidic residues. Residues 129–143 (ESLPSSSSEQSPLQK) show a composition bias toward low complexity. A compositionally biased stretch (acidic residues) spans 153 to 164 (ELTEEEAEEPDD). Residues 192–294 (RPPLNCSHLI…RVLAFAQRER (103 aa)) constitute a DNA-binding region (fork-head).

As to expression, expressed in breast cancer cell lines and primary cancer.

It is found in the nucleus. The polypeptide is Forkhead box protein R2 (FOXR2) (Homo sapiens (Human)).